Here is a 159-residue protein sequence, read N- to C-terminus: Urease accessory protein UreE (159 aa).

The tract at residues Gly140 to Gly159 is disordered.

This sequence belongs to the UreE family.

The protein resides in the cytoplasm. Involved in urease metallocenter assembly. Binds nickel. Probably functions as a nickel donor during metallocenter assembly. This chain is Urease accessory protein UreE, found in Sinorhizobium fredii (strain NBRC 101917 / NGR234).